The following is an 82-amino-acid chain: Musculoskeletal embryonic nuclear protein 1 (82 aa).

2 disordered regions span residues 1–33 and 49–82; these read MSQA…LTKN and QAGS…SVFG. Ser-2 bears the Phosphoserine mark. A Nuclear localization signal motif is present at residues 10–18; sequence PIKKKRPPV.

It belongs to the MUSTN1 family. As to expression, expression in skeletal muscle is reduced during limb unloading but increases during the active recovery phase that follows.

It is found in the nucleus. The protein localises to the cytoplasm. Its subcellular location is the secreted. The protein resides in the extracellular space. In terms of biological role, required for chondrocyte development and proliferation. Plays a role in myoblast differentiation and fusion. Modulates skeletal muscle extracellular matrix composition. Plays a role in skeletal muscle function. Plays a role in glucose homeostasis. The sequence is that of Musculoskeletal embryonic nuclear protein 1 (MUSTN1) from Homo sapiens (Human).